The following is an 828-amino-acid chain: Periplasmic nitrate reductase (828 aa).

A signal peptide (tat-type signal) is located at residues 1-31 (MKLSRRSFMKANAVAAAAAAAGLSVPGVARA). Residues 39–95 (IKWDKAPCRFCGTGCGVLVGTQQGRVVACQGDPDAPVNRGLNCIKGYFLPKIMYGKD) form the 4Fe-4S Mo/W bis-MGD-type domain. 4 residues coordinate [4Fe-4S] cluster: Cys46, Cys49, Cys53, and Cys81. Mo-bis(molybdopterin guanine dinucleotide)-binding positions include Lys83, Gln150, Asn175, Cys179, 212 to 219 (WGANMAEM), 243 to 247 (STYQH), 262 to 264 (QSD), Met372, Gln376, Asn482, 508 to 509 (SD), Lys531, Asp558, and 718 to 727 (TGRVLEHWHT). Position 794 (Phe794) interacts with substrate. Mo-bis(molybdopterin guanine dinucleotide) is bound by residues Asn802 and Lys819.

Belongs to the prokaryotic molybdopterin-containing oxidoreductase family. NasA/NapA/NarB subfamily. As to quaternary structure, component of the periplasmic nitrate reductase NapAB complex composed of NapA and NapB. [4Fe-4S] cluster serves as cofactor. Mo-bis(molybdopterin guanine dinucleotide) is required as a cofactor. Predicted to be exported by the Tat system. The position of the signal peptide cleavage has not been experimentally proven.

The protein localises to the periplasm. The catalysed reaction is 2 Fe(II)-[cytochrome] + nitrate + 2 H(+) = 2 Fe(III)-[cytochrome] + nitrite + H2O. Functionally, catalytic subunit of the periplasmic nitrate reductase complex NapAB. Receives electrons from NapB and catalyzes the reduction of nitrate to nitrite. This Escherichia coli (strain K12 / MC4100 / BW2952) protein is Periplasmic nitrate reductase.